The chain runs to 343 residues: Cyclin-Y-like protein 1 (343 aa).

A disordered region spans residues 1–48 (MGNTVTCCVSPDASPKAGRDRAVTERGEPYQAQVELQETDPGPHLQHI). A compositionally biased stretch (basic and acidic residues) spans 17–28 (AGRDRAVTERGE). The region spanning 145-267 (EIFDEKLHPL…FLELLQFNIN (123 aa)) is the Cyclin N-terminal domain.

This sequence belongs to the cyclin family. Cyclin Y subfamily.

Its subcellular location is the cell membrane. Its function is as follows. Key regulator of Wnt signaling implicated in various biological processes, such as embryonic neurogenesis. This is Cyclin-Y-like protein 1 (ccnyl1) from Xenopus tropicalis (Western clawed frog).